The chain runs to 631 residues: tRNA 5-methylaminomethyl-2-thiouridine biosynthesis bifunctional protein MnmC (631 aa).

Positions 1-243 are tRNA (mnm(5)s(2)U34)-methyltransferase; that stretch reads MITDLRPPAM…KREMLTGRLP (243 aa). An FAD-dependent cmnm(5)s(2)U34 oxidoreductase region spans residues 261–631; sequence IGAGIAGAAL…GRLYRNQLTV (371 aa).

This sequence in the N-terminal section; belongs to the methyltransferase superfamily. tRNA (mnm(5)s(2)U34)-methyltransferase family. In the C-terminal section; belongs to the DAO family. FAD is required as a cofactor.

Its subcellular location is the cytoplasm. The enzyme catalyses 5-aminomethyl-2-thiouridine(34) in tRNA + S-adenosyl-L-methionine = 5-methylaminomethyl-2-thiouridine(34) in tRNA + S-adenosyl-L-homocysteine + H(+). Functionally, catalyzes the last two steps in the biosynthesis of 5-methylaminomethyl-2-thiouridine (mnm(5)s(2)U) at the wobble position (U34) in tRNA. Catalyzes the FAD-dependent demodification of cmnm(5)s(2)U34 to nm(5)s(2)U34, followed by the transfer of a methyl group from S-adenosyl-L-methionine to nm(5)s(2)U34, to form mnm(5)s(2)U34. The sequence is that of tRNA 5-methylaminomethyl-2-thiouridine biosynthesis bifunctional protein MnmC from Marinobacter nauticus (strain ATCC 700491 / DSM 11845 / VT8) (Marinobacter aquaeolei).